We begin with the raw amino-acid sequence, 54 residues long: Preprotein translocase subunit SecG (54 aa).

At 1-30 the chain is on the cytoplasmic side; the sequence is MSKNKQDAGLSTSAGLVRYMDEDASKIKIA. The chain crosses the membrane as a helical span at residues 31-52; it reads PEKVLGITISIMVLLFILNYGL. Over 53 to 54 the chain is Extracellular; it reads LA.

The protein belongs to the SEC61-beta family. As to quaternary structure, component of the protein translocase complex. Heterotrimer consisting of alpha (SecY), beta (SecG) and gamma (SecE) subunits. Can form oligomers of the heterotrimer.

The protein localises to the cell membrane. Functionally, involved in protein export. The function of the beta subunit is unknown, but it may be involved in stabilization of the trimeric complex. The protein is Preprotein translocase subunit SecG of Methanococcus aeolicus (strain ATCC BAA-1280 / DSM 17508 / OCM 812 / Nankai-3).